The chain runs to 257 residues: Pyridoxine 5'-phosphate synthase (257 aa).

Asn-12 is a 3-amino-2-oxopropyl phosphate binding site. Asp-14–His-15 is a binding site for 1-deoxy-D-xylulose 5-phosphate. Arg-23 contacts 3-amino-2-oxopropyl phosphate. His-48 serves as the catalytic Proton acceptor. Positions 50 and 55 each coordinate 1-deoxy-D-xylulose 5-phosphate. Residue Glu-75 is the Proton acceptor of the active site. Thr-105 lines the 1-deoxy-D-xylulose 5-phosphate pocket. Residue His-199 is the Proton donor of the active site. Residues Gly-200 and Gly-221–His-222 contribute to the 3-amino-2-oxopropyl phosphate site.

Belongs to the PNP synthase family. In terms of assembly, homooctamer; tetramer of dimers.

The protein localises to the cytoplasm. It carries out the reaction 3-amino-2-oxopropyl phosphate + 1-deoxy-D-xylulose 5-phosphate = pyridoxine 5'-phosphate + phosphate + 2 H2O + H(+). It participates in cofactor biosynthesis; pyridoxine 5'-phosphate biosynthesis; pyridoxine 5'-phosphate from D-erythrose 4-phosphate: step 5/5. Catalyzes the complicated ring closure reaction between the two acyclic compounds 1-deoxy-D-xylulose-5-phosphate (DXP) and 3-amino-2-oxopropyl phosphate (1-amino-acetone-3-phosphate or AAP) to form pyridoxine 5'-phosphate (PNP) and inorganic phosphate. This chain is Pyridoxine 5'-phosphate synthase, found in Xanthobacter autotrophicus (strain ATCC BAA-1158 / Py2).